We begin with the raw amino-acid sequence, 1113 residues long: MHTTRSPSASIQAGAAGDALDLSLNGSQLTMGRRPSSASPGKHFSRSISVSVAYDGRGKRNTLTDAGLGSSRAIKNLRRSNSTTQVNQQANTSLSSEGHTEDFLALFNSSSDGRRKLASLSKMSKDRTTWNILDDQPRVFPVPSSSHSTCSMDSPTGLKKREAGVSLAANFTANNRSNKAAVGNAVTAILHNNHSEKPLTPKSSNQKPSFNNLIKATVNDDVTLDVSGSLTKSQKNFSSASSSSNNNAPRSPRSPGQPRRREVTEEEAERYIQQVNHAAIIIQRWYRRHVNSKRANENIIKQLLASKKKEREQRAEEAKTTESLKKKEDDRKRIREEKARLARLTAIQELQQKRAQRAAEVQQIAEQETEALRHPGKVGRKKLTKSSPTSPTDIKAKNTDSNVNVVSDLDDVTNLRAASPAGSACRVSQCSQEILQRSVSMEDQRQGASSSRAQSKTTLNDLLDTLKLLEEEPERLSEPKSYRKDKYSWIDEDGDSNSLTTDNVERHRQLSQTPALPDGGALLSEAKLQSIMSFLDEMEKSEQERPRSVTSGSHREVVLSEEDLAVVEQASATAAEVTGSMMRLRLELDEKKRTVNMLQTALAQQRELTIRHVKETEKELNHTFQLQKEQYEATIQRHLTFIDQLIDDKKALSERCEEVVGELKQVDQKYTKKIAQMQEQHELVWQILGPMCEEIKKLKELMSATEKVRREKWINEKTKKIKEITVKGLEPEIQKLISKHKQELKKLRVLHEAELLQADERAAQRYVRQSEELRQQLEKEKDEQCQRERELAKQRFEKQLQEEENVLQQQRRRLYKEVSEEKERLTQLAARQHAELEDLRKQLEDNSSLAGRALREELEKSRDEQERRHQVEIKALKERLEIEKQTWEENYMKKEEAWLLSRERELKEEVRRGRDKEIELAIQRLEVETREAREECERAADNRMKRVREKYEAELRDLERSERTSLQKQQEMREKHSEMEAELLRLQSLLRQREQEISDLTQVTARDKLSEERRSLSEVIRQEFAERLIELEEENRRMKMEVSEAKARLRLEVERVTREKEEELAEVHQRVKSAILKKEETVNNLRKQHEAAVKRADHLESLLEQQRKQLLGK.

Disordered stretches follow at residues 78 to 97 and 232 to 267; these read RRSN…LSSE and KSQK…TEEE. Polar residues predominate over residues 79-97; it reads RSNSTTQVNQQANTSLSSE. Residues 238–257 show a composition bias toward low complexity; it reads SSASSSSNNNAPRSPRSPGQ. Positions 259-371 form a coiled coil; the sequence is RRREVTEEEA…QQIAEQETEA (113 aa). Residues 276-296 form the IQ domain; the sequence is NHAAIIIQRWYRRHVNSKRAN. 3 disordered regions span residues 306-331, 368-401, and 438-458; these read SKKK…EDDR, ETEA…NTDS, and SVSM…SKTT. A compositionally biased stretch (basic and acidic residues) spans 307 to 331; sequence KKKEREQRAEEAKTTESLKKKEDDR. Basic residues predominate over residues 374–384; it reads HPGKVGRKKLT. The segment covering 446 to 458 has biased composition (low complexity); it reads QGASSSRAQSKTT. Positions 580–1111 form a coiled coil; it reads SMMRLRLELD…LLEQQRKQLL (532 aa).

This sequence belongs to the CEP131 family.

It is found in the chromosome. The protein resides in the centromere. It localises to the cytoplasm. The protein localises to the cytoskeleton. Its subcellular location is the microtubule organizing center. It is found in the centrosome. The protein resides in the centriolar satellite. It localises to the cilium basal body. The protein localises to the cytoplasmic vesicle. Its subcellular location is the secretory vesicle. It is found in the acrosome. Cilium-specific protein required for the regulation of cilium/flagellum formation. Involved in centriole duplication. May play a role in melanosome trafficking. This is Centrosomal protein of 131 kDa (cep131) from Danio rerio (Zebrafish).